The chain runs to 261 residues: tRNA pseudouridine synthase A 2 (261 aa).

Aspartate 59 acts as the Nucleophile in catalysis. Tyrosine 117 serves as a coordination point for substrate.

The protein belongs to the tRNA pseudouridine synthase TruA family. Homodimer.

The enzyme catalyses uridine(38/39/40) in tRNA = pseudouridine(38/39/40) in tRNA. Its function is as follows. Formation of pseudouridine at positions 38, 39 and 40 in the anticodon stem and loop of transfer RNAs. The sequence is that of tRNA pseudouridine synthase A 2 from Desulfotalea psychrophila (strain LSv54 / DSM 12343).